A 468-amino-acid polypeptide reads, in one-letter code: Asparagine--tRNA ligase (468 aa).

Belongs to the class-II aminoacyl-tRNA synthetase family. As to quaternary structure, homodimer.

The protein localises to the cytoplasm. It catalyses the reaction tRNA(Asn) + L-asparagine + ATP = L-asparaginyl-tRNA(Asn) + AMP + diphosphate + H(+). The chain is Asparagine--tRNA ligase from Parabacteroides distasonis (strain ATCC 8503 / DSM 20701 / CIP 104284 / JCM 5825 / NCTC 11152).